Consider the following 174-residue polypeptide: MINPELRDGRADGFIHRIVPKLIQNWKIGLMCFLSIIITTVCIIMIATWSKHAKPVACSGDWLGVRDKCFYFSDDTRNWTASKIFCSLQKAELAQIDTQEDMEFLKRYAGTDMHWIGLSRKQGDSWKWTNGTTFNGWFEIIGNGSFAFLSADGVHSSRGFIDIKWICSKPKYFL.

Residues 1 to 27 lie on the Cytoplasmic side of the membrane; that stretch reads MINPELRDGRADGFIHRIVPKLIQNWK. Residues 28–48 form a helical; Signal-anchor for type II membrane protein membrane-spanning segment; sequence IGLMCFLSIIITTVCIIMIAT. The Extracellular segment spans residues 49–174; that stretch reads WSKHAKPVAC…WICSKPKYFL (126 aa). Cys-58 and Cys-69 are disulfide-bonded. The C-type lectin domain maps to 65-174; sequence VRDKCFYFSD…WICSKPKYFL (110 aa). Residues Asn-78, Asn-130, and Asn-143 are each glycosylated (N-linked (GlcNAc...) asparagine). Cys-86 and Cys-167 are disulfide-bonded.

As to quaternary structure, homodimer; non-disulfide-linked. Interacts with KLRB1. Interacts with KLRF2. N-glycosylated. In terms of tissue distribution, mainly expressed in skin. Also expressed in keratinocytes, spleen, thymus, small intestine, peripheral blood monocytes, bone marrow, ovary, testis and skin. High expression in CD8(+), B-lymphocytes and naive CD4(+) T-cells. Restricted mostly to proliferating lymphocytes. Not detected in myeloid leukocytes or natural killer (NK) cells.

The protein localises to the cell membrane. In terms of biological role, membrane-bound protein expressed mainly on keratinocytes which acts as a ligand to stimulate the activating receptor NKp65/KLRF2, expressed on the surface of natural killer (NK) cells. Facilitates thereby dedicated immune recognition of keratinocytes leading to natural killer cell mediated cytotoxicity. Also plays a role in modulating the extent of T-cell expansion. The sequence is that of C-type lectin domain family 2 member A (CLEC2A) from Homo sapiens (Human).